Here is a 52-residue protein sequence, read N- to C-terminus: Dibenzothiophene metabolism operon protein NahQ/DoxH (52 aa).

It functions in the pathway aromatic compound metabolism; naphthalene degradation. Its function is as follows. May be involved in the conversion of 2-hydroxy-4-(2'-oxo-3,5-cyclohexadienyl)-buta-2,4-dienoate to cis-O-hydroxybenzylidenepyruvate. DoxH and DoxJ encode different enzymes that may have interchangeable functions. This chain is Dibenzothiophene metabolism operon protein NahQ/DoxH (nahQ), found in Pseudomonas putida (Arthrobacter siderocapsulatus).